Consider the following 422-residue polypeptide: Putative acid phosphatase 5 (422 aa).

Residues 1–13 form the signal peptide; the sequence is MLLLLVLLIGASG. Histidine 40 acts as the Nucleophile in catalysis. 3 N-linked (GlcNAc...) asparagine glycosylation sites follow: asparagine 104, asparagine 210, and asparagine 218. 3 disulfide bridges follow: cysteine 152-cysteine 363, cysteine 205-cysteine 302, and cysteine 338-cysteine 342. Aspartate 279 serves as the catalytic Proton donor. N-linked (GlcNAc...) asparagine glycans are attached at residues asparagine 312 and asparagine 323.

Belongs to the histidine acid phosphatase family.

It carries out the reaction a phosphate monoester + H2O = an alcohol + phosphate. This chain is Putative acid phosphatase 5 (pho-5), found in Caenorhabditis elegans.